The following is a 294-amino-acid chain: Homeobox protein Nkx-2.5 (294 aa).

Disordered stretches follow at residues 48 to 69 (GSEPPALPELPEPPPAKPPAAF) and 102 to 122 (EQEKRELEDPERPRQRKRRKP). Over residues 52–69 (PALPELPEPPPAKPPAAF) the composition is skewed to pro residues. A compositionally biased stretch (basic and acidic residues) spans 102-114 (EQEKRELEDPERP). Residues 119–178 (RRKPRVLFSQAQVYELERRFKQQKYLSAPERDHLANVLKLTSTQVKIWFQNRRYKCKRQR) constitute a DNA-binding region (homeobox).

The protein belongs to the NK-2 homeobox family. In terms of assembly, homodimer (via the homeobox); binds DNA as homodimer.

It is found in the nucleus. Transcription factor required for the development of the heart and the spleen. Implicated in commitment to and/or differentiation of the myocardial lineage. Binds to the core DNA motif of promoter. The polypeptide is Homeobox protein Nkx-2.5 (NKX-2.5) (Gallus gallus (Chicken)).